Consider the following 430-residue polypeptide: Probable sulfoacetate transporter SauU (430 aa).

The next 10 membrane-spanning stretches (helical) occupy residues 47–67, 83–103, 142–162, 165–185, 228–248, 263–283, 301–321, 327–347, 362–382, and 390–410; these read LGLV…LGGW, LIWG…ILVV, FARL…AAAG, EAFI…AFFF, WLVT…LTWL, LALF…LGGV, AVLF…TFTA, VILL…LWSL, MMNT…GYLI, and LPFM…LFIN.

The protein belongs to the major facilitator superfamily.

The protein resides in the cell membrane. Its function is as follows. May transport sulfoacetate into the cell. In Cupriavidus necator (strain ATCC 17699 / DSM 428 / KCTC 22496 / NCIMB 10442 / H16 / Stanier 337) (Ralstonia eutropha), this protein is Probable sulfoacetate transporter SauU (sauU).